Consider the following 137-residue polypeptide: ATP synthase epsilon chain (137 aa).

This sequence belongs to the ATPase epsilon chain family. In terms of assembly, F-type ATPases have 2 components, CF(1) - the catalytic core - and CF(0) - the membrane proton channel. CF(1) has five subunits: alpha(3), beta(3), gamma(1), delta(1), epsilon(1). CF(0) has three main subunits: a, b and c.

Its subcellular location is the cellular thylakoid membrane. Functionally, produces ATP from ADP in the presence of a proton gradient across the membrane. This Nostoc punctiforme (strain ATCC 29133 / PCC 73102) protein is ATP synthase epsilon chain.